The following is a 96-amino-acid chain: Protein TraA (96 aa).

This is Protein TraA (traA) from Escherichia coli.